A 447-amino-acid chain; its full sequence is N-succinylarginine dihydrolase (447 aa).

Substrate is bound by residues 19 to 28 (AGLSFGNEAS), N110, and 137 to 138 (HR). Residue E174 is part of the active site. A substrate-binding site is contributed by R213. H249 is a catalytic residue. Substrate contacts are provided by D251 and N364. C370 acts as the Nucleophile in catalysis.

It belongs to the succinylarginine dihydrolase family. In terms of assembly, homodimer.

The catalysed reaction is N(2)-succinyl-L-arginine + 2 H2O + 2 H(+) = N(2)-succinyl-L-ornithine + 2 NH4(+) + CO2. Its pathway is amino-acid degradation; L-arginine degradation via AST pathway; L-glutamate and succinate from L-arginine: step 2/5. Its function is as follows. Catalyzes the hydrolysis of N(2)-succinylarginine into N(2)-succinylornithine, ammonia and CO(2). This chain is N-succinylarginine dihydrolase, found in Yersinia pseudotuberculosis serotype O:1b (strain IP 31758).